The sequence spans 264 residues: Thymidylate synthase (264 aa).

A dUMP-binding site is contributed by R21. (6R)-5,10-methylene-5,6,7,8-tetrahydrofolate is bound at residue H51. DUMP is bound at residue 126 to 127 (RR). C146 serves as the catalytic Nucleophile. Residues 166-169 (RSCD), N177, and 207-209 (HLY) contribute to the dUMP site. D169 serves as a coordination point for (6R)-5,10-methylene-5,6,7,8-tetrahydrofolate. Position 263 (A263) interacts with (6R)-5,10-methylene-5,6,7,8-tetrahydrofolate.

This sequence belongs to the thymidylate synthase family. Bacterial-type ThyA subfamily. As to quaternary structure, homodimer.

Its subcellular location is the cytoplasm. It carries out the reaction dUMP + (6R)-5,10-methylene-5,6,7,8-tetrahydrofolate = 7,8-dihydrofolate + dTMP. It participates in pyrimidine metabolism; dTTP biosynthesis. Catalyzes the reductive methylation of 2'-deoxyuridine-5'-monophosphate (dUMP) to 2'-deoxythymidine-5'-monophosphate (dTMP) while utilizing 5,10-methylenetetrahydrofolate (mTHF) as the methyl donor and reductant in the reaction, yielding dihydrofolate (DHF) as a by-product. This enzymatic reaction provides an intracellular de novo source of dTMP, an essential precursor for DNA biosynthesis. The polypeptide is Thymidylate synthase (Aeromonas salmonicida (strain A449)).